Here is a 269-residue protein sequence, read N- to C-terminus: 15-hydroxyprostaglandin dehydrogenase [NAD(+)] (269 aa).

Residues 12 to 20 (GAAQGIGKA), 36 to 37 (DW), 63 to 65 (CDV), and N91 contribute to the NAD(+) site. The substrate site is built by S138 and Q148. The active-site Proton acceptor is Y151. NAD(+) is bound by residues 151–155 (YCASK) and 186–188 (VDT).

Belongs to the short-chain dehydrogenases/reductases (SDR) family. In terms of assembly, homodimer. In terms of tissue distribution, expressed in proximal convoluted tubules of the kidney, where it colocalizes with the prostaglandin transporter SLC22A22 (at protein level). Expressed in lung, intestine, stomach and liver.

The protein resides in the cytoplasm. It carries out the reaction prostaglandin E2 + NAD(+) = 15-oxoprostaglandin E2 + NADH + H(+). It catalyses the reaction (15S)-hydroxy-(5Z,8Z,11Z,13E)-eicosatetraenoate + NAD(+) = 15-oxo-(5Z,8Z,11Z,13E)-eicosatetraenoate + NADH + H(+). The enzyme catalyses (11R)-hydroxy-(5Z,8Z,12E,14Z)-eicosatetraenoate + NAD(+) = 11-oxo-(5Z,8Z,12E,14Z)-eicosatetraenoate + NADH + H(+). The catalysed reaction is lipoxin A4 + NAD(+) = 15-oxo-(5S,6R)-dihydroxy-(7E,9E,11Z,13E)-eicosatetraenoate + NADH + H(+). It carries out the reaction 15-oxo-(5S,6R)-dihydroxy-(7E,9E,11Z)-eicosatrienoate + NADH + H(+) = (5S,6R,15S)-trihydroxy-(7E,9E,11Z)-eicosatrienoate + NAD(+). It catalyses the reaction prostaglandin A1 + NAD(+) = 15-oxo-prostaglandin A1 + NADH + H(+). The enzyme catalyses prostaglandin E1 + NAD(+) = 15-oxoprostaglandin E1 + NADH + H(+). The catalysed reaction is 14-hydroxy-(4Z,7Z,10Z,12E,16Z,19Z)-docosahexaenoate + NAD(+) = 14-oxo-(4Z,7Z,10Z,12E,16Z,19Z)-docosahexaenoate + NADH + H(+). It carries out the reaction resolvin E1 + NAD(+) = 18-oxo-resolvin E1 + NADH + H(+). It catalyses the reaction resolvin D1 + NAD(+) = 8-oxoresolvin D1 + NADH + H(+). The enzyme catalyses resolvin D1 + NAD(+) = 17-oxoresolvin D1 + NADH + H(+). The catalysed reaction is resolvin D2 + NAD(+) = 7-oxoresolvin D2 + NADH + H(+). It carries out the reaction resolvin D2 + NAD(+) = 16-oxoresolvin D2 + NADH + H(+). Functionally, catalyzes the NAD-dependent dehydrogenation (oxidation) of a broad array of hydroxylated polyunsaturated fatty acids (mainly eicosanoids and docosanoids, including prostaglandins, lipoxins and resolvins), yielding their corresponding keto (oxo) metabolites. Decreases the levels of the pro-proliferative prostaglandins such as prostaglandin E2 (whose activity is increased in cancer because of an increase in the expression of cyclooxygenase 2) and generates oxo-fatty acid products that can profoundly influence cell function by abrogating pro-inflammatory cytokine expression. Converts resolvins E1, D1 and D2 to their oxo products, which represents a mode of resolvin inactivation. Resolvin E1 plays important roles during the resolution phase of acute inflammation, while resolvins D1 and D2 have a unique role in obesity-induced adipose inflammation. In Mus musculus (Mouse), this protein is 15-hydroxyprostaglandin dehydrogenase [NAD(+)] (Hpgd).